A 529-amino-acid polypeptide reads, in one-letter code: Type I restriction enzyme EcoKI methylase subunit (529 aa).

Residues 148-153, 178-180, and glutamate 216 each bind S-adenosyl-L-methionine; these read QYFTPR and TAG.

This sequence belongs to the N(4)/N(6)-methyltransferase family. In terms of assembly, the type I restriction/modification system is composed of three polypeptides R, M and S. The restriction enzyme has stoichiometry R(2)M(2)S(1). The methyltransferase is composed of M(2)S(1). (Microbial infection) Interacts with Escherichia phage T7 protein Ocr; this interaction leads to the inhibition of the methyltransferase restriction enzyme M.EcoKI composed of M(2)S(1).

It carries out the reaction a 2'-deoxyadenosine in DNA + S-adenosyl-L-methionine = an N(6)-methyl-2'-deoxyadenosine in DNA + S-adenosyl-L-homocysteine + H(+). The subtype gamma methyltransferase (M) subunit of a type I restriction enzyme. The M and S subunits together form a methyltransferase (MTase) that methylates A-2 on the top and A-3 on the bottom strand of the sequence 5'-AACN(6)GTGC-3'. In the presence of the R subunit the complex can also act as an endonuclease, binding to the same target sequence but cutting the DNA some distance from this site. Whether the DNA is cut or modified depends on the methylation state of the target sequence. When the target site is unmodified, the DNA is cut. When the target site is hemimethylated, the complex acts as a maintenance MTase modifying the DNA so that both strands become methylated. After locating a non-methylated recognition site, the enzyme complex serves as a molecular motor that translocates DNA in an ATP-dependent manner until a collision occurs that triggers cleavage. This Escherichia coli (strain K12) protein is Type I restriction enzyme EcoKI methylase subunit.